The sequence spans 599 residues: Sulfite reductase [NADPH] flavoprotein alpha-component (599 aa).

A Flavodoxin-like domain is found at 64 to 202 (ITIISASQTG…AASEWRARVV (139 aa)). FMN is bound by residues 70-75 (SQTGNA), 117-120 (STQG), and 153-162 (LGDSSYEFFC). The region spanning 234–448 (DAPLVASLSV…IEHNDNFRLP (215 aa)) is the FAD-binding FR-type domain. Residues T322, A356, 386 to 389 (RLYS), 404 to 406 (TVG), Y410, and 419 to 422 (GGAS) contribute to the FAD site. NADP(+) is bound by residues 519–520 (SR), 525–529 (KVYVQ), and D561. Y599 is an FAD binding site.

Belongs to the NADPH-dependent sulphite reductase flavoprotein subunit CysJ family. It in the N-terminal section; belongs to the flavodoxin family. This sequence in the C-terminal section; belongs to the flavoprotein pyridine nucleotide cytochrome reductase family. In terms of assembly, alpha(8)-beta(8). The alpha component is a flavoprotein, the beta component is a hemoprotein. FAD serves as cofactor. FMN is required as a cofactor.

It carries out the reaction hydrogen sulfide + 3 NADP(+) + 3 H2O = sulfite + 3 NADPH + 4 H(+). Its pathway is sulfur metabolism; hydrogen sulfide biosynthesis; hydrogen sulfide from sulfite (NADPH route): step 1/1. Its function is as follows. Component of the sulfite reductase complex that catalyzes the 6-electron reduction of sulfite to sulfide. This is one of several activities required for the biosynthesis of L-cysteine from sulfate. The flavoprotein component catalyzes the electron flow from NADPH -&gt; FAD -&gt; FMN to the hemoprotein component. This chain is Sulfite reductase [NADPH] flavoprotein alpha-component, found in Escherichia coli O157:H7.